We begin with the raw amino-acid sequence, 215 residues long: Pyridoxine/pyridoxamine 5'-phosphate oxidase (215 aa).

Substrate is bound by residues 11–14 and K69; that span reads RRDY. FMN is bound by residues 64-69, 79-80, K86, and Q108; these read RVVLLK and YT. Substrate is bound by residues Y126, R130, and S134. Residues 143-144 and W188 each bind FMN; that span reads QS. Substrate is bound at residue 194–196; sequence RLH. Residue R198 coordinates FMN.

The protein belongs to the pyridoxamine 5'-phosphate oxidase family. Homodimer. FMN serves as cofactor.

It carries out the reaction pyridoxamine 5'-phosphate + O2 + H2O = pyridoxal 5'-phosphate + H2O2 + NH4(+). The catalysed reaction is pyridoxine 5'-phosphate + O2 = pyridoxal 5'-phosphate + H2O2. It participates in cofactor metabolism; pyridoxal 5'-phosphate salvage; pyridoxal 5'-phosphate from pyridoxamine 5'-phosphate: step 1/1. Its pathway is cofactor metabolism; pyridoxal 5'-phosphate salvage; pyridoxal 5'-phosphate from pyridoxine 5'-phosphate: step 1/1. In terms of biological role, catalyzes the oxidation of either pyridoxine 5'-phosphate (PNP) or pyridoxamine 5'-phosphate (PMP) into pyridoxal 5'-phosphate (PLP). The polypeptide is Pyridoxine/pyridoxamine 5'-phosphate oxidase (Legionella pneumophila (strain Lens)).